The sequence spans 204 residues: Cytochrome c oxidase subunit 3 (204 aa).

Transmembrane regions (helical) follow at residues 12–32, 56–76, 101–121, 133–153, and 171–191; these read YGNL…IQWW, GMML…WAYF, FQIP…VTWA, AIHS…LQMM, and FFVA…FLFM.

The protein belongs to the cytochrome c oxidase subunit 3 family. Component of the cytochrome c oxidase (complex IV, CIV), a multisubunit enzyme composed of a catalytic core of 3 subunits and several supernumerary subunits. The complex exists as a monomer or a dimer and forms supercomplexes (SCs) in the inner mitochondrial membrane with ubiquinol-cytochrome c oxidoreductase (cytochrome b-c1 complex, complex III, CIII).

It is found in the mitochondrion inner membrane. The catalysed reaction is 4 Fe(II)-[cytochrome c] + O2 + 8 H(+)(in) = 4 Fe(III)-[cytochrome c] + 2 H2O + 4 H(+)(out). Its function is as follows. Component of the cytochrome c oxidase, the last enzyme in the mitochondrial electron transport chain which drives oxidative phosphorylation. The respiratory chain contains 3 multisubunit complexes succinate dehydrogenase (complex II, CII), ubiquinol-cytochrome c oxidoreductase (cytochrome b-c1 complex, complex III, CIII) and cytochrome c oxidase (complex IV, CIV), that cooperate to transfer electrons derived from NADH and succinate to molecular oxygen, creating an electrochemical gradient over the inner membrane that drives transmembrane transport and the ATP synthase. Cytochrome c oxidase is the component of the respiratory chain that catalyzes the reduction of oxygen to water. Electrons originating from reduced cytochrome c in the intermembrane space (IMS) are transferred via the dinuclear copper A center (CU(A)) of subunit 2 and heme A of subunit 1 to the active site in subunit 1, a binuclear center (BNC) formed by heme A3 and copper B (CU(B)). The BNC reduces molecular oxygen to 2 water molecules using 4 electrons from cytochrome c in the IMS and 4 protons from the mitochondrial matrix. The chain is Cytochrome c oxidase subunit 3 (COIII) from Enteroctopus dofleini (North Pacific giant octopus).